A 93-amino-acid polypeptide reads, in one-letter code: LSM complex subunit LSM5 (93 aa).

The 81-residue stretch at 7–87 (LPLEVIDKTI…IAILVPGGKK (81 aa)) folds into the Sm domain.

The protein belongs to the snRNP Sm proteins family. Component of the heptameric LSM1-LSM7 complex that forms a seven-membered ring structure with a donut shape. The LSm subunits are arranged in the order LSM1, LSM2, LSM3, LSM6, LSM5, LSM7 and LSM4. Except for LSM1, where a C-terminal helix crosses the ring structure to form additional interactions with LSM3 and LSM6, each subunit interacts only with its two neighboring subunits. The LSM1-LSM7 complex interacts with PAT1; within the complex PAT1 has direct interactions with LSM2 and LSM3. The LSM1-LSM7 complex interacts with XRN1. Component of the heptameric LSM2-LSM8 complex that forms a seven-membered ring structure with a donut shape; an RNA strand can pass through the hole in the center of the ring structure. The LSm subunits are arranged in the order LSM8, LSM2, LSM3, LSM6, LSM5, LSM7 and LSM4. Component of the spliceosome U4/U6-U5 tri-snRNP complex composed of the U4, U6 and U5 snRNAs and at least PRP3, PRP4, PRP6, PRP8, PRP18, PRP31, PRP38, SNU13, SNU23, SNU66, SNU114, SPP381, SMB1, SMD1, SMD2, SMD3, SMX2, SMX3, LSM2, LSM3, LSM4, LSM5, LSM6, LSM7, LSM8, BRR2 and DIB1. May be found in a complex comprising LSM2-LSM7 without LSM1 or LSM8; the complex associates with pre-P RNA and snoRNA SNR5.

The protein localises to the nucleus. It is found in the nucleolus. The protein resides in the cytoplasm. Component of LSm protein complexes, which are involved in RNA processing and may function in a chaperone-like manner. Component of the cytoplasmic LSM1-LSM7 complex which is involved in mRNA degradation by activating the decapping step. Together with PAT1, the LSM1-LSM7 complex binds to osmotic stress-activated mRNAs to attenuate the osmotic stress response, probably by limiting ribosome access to the mRNA and consequently translation. Component of the nuclear LSM2-LSM8 complex, which is involved in spliceosome assembly. The LSM2-LSM8 complex plays a role in the biogenesis of the spliceosomal U4/U6-U5 tri-snRNP complex by accelerating PRP24-mediated annealing of U4/U6 di-snRNA. The LSM2-LSM8 complex binds U6 snRNA terminating with a non-cyclic 3' phosphate group. LSM2-LSM8 is probably also involved in degradation of nuclear pre-mRNA by targeting them for decapping. LSM2-LSM8 could be involved in processing of pre-tRNAs, pre-rRNAs and U3 snoRNA, although involvement may be indirect. In a complex that probably contains LSM2-LSM7, but not LSM1 or LSM8, associates with the precursor of the RNA component of RNase P (pre-P RNA) and may be involved in maturing pre-P RNA; the complex also associates with snoRNA SNR5. This Saccharomyces cerevisiae (strain ATCC 204508 / S288c) (Baker's yeast) protein is LSM complex subunit LSM5 (LSM5).